Here is a 345-residue protein sequence, read N- to C-terminus: Putative mediator of RNA polymerase II transcription subunit 7 (345 aa).

Composition is skewed to low complexity over residues 1 to 27 (MNTS…TPQQ) and 88 to 126 (NNNN…NNNN). Disordered regions lie at residues 1–130 (MNTS…KATT) and 292–315 (TPLP…NNSQ).

It belongs to the Mediator complex subunit 7 family. Component of the Mediator complex.

It localises to the nucleus. In terms of biological role, component of the Mediator complex, a coactivator involved in the regulated transcription of nearly all RNA polymerase II-dependent genes. Mediator functions as a bridge to convey information from gene-specific regulatory proteins to the basal RNA polymerase II transcription machinery. Mediator is recruited to promoters by direct interactions with regulatory proteins and serves as a scaffold for the assembly of a functional preinitiation complex with RNA polymerase II and the general transcription factors. This Dictyostelium discoideum (Social amoeba) protein is Putative mediator of RNA polymerase II transcription subunit 7 (med7).